A 98-amino-acid chain; its full sequence is MAQLVRDRIPELIRASGRTPVIRTLSDDEYWAALDAKLDEEVAELRAADTRDAALEGGRHRHRGESASGNGIQHGVPPNVALIPSGSTLLTPARSGHV.

Residues 53–98 are disordered; sequence AALEGGRHRHRGESASGNGIQHGVPPNVALIPSGSTLLTPARSGHV.

This is an uncharacterized protein from Mycolicibacterium smegmatis (strain ATCC 700084 / mc(2)155) (Mycobacterium smegmatis).